Here is a 559-residue protein sequence, read N- to C-terminus: Urocanate hydratase (559 aa).

NAD(+) contacts are provided by residues 53 to 54, Gln131, 177 to 179, Glu197, Arg202, 243 to 244, 264 to 268, 274 to 275, and Tyr323; these read GG, GMG, NA, QTSAH, and YL. The active site involves Cys411. Gly493 lines the NAD(+) pocket.

The protein belongs to the urocanase family. It depends on NAD(+) as a cofactor.

It localises to the cytoplasm. The enzyme catalyses 4-imidazolone-5-propanoate = trans-urocanate + H2O. It functions in the pathway amino-acid degradation; L-histidine degradation into L-glutamate; N-formimidoyl-L-glutamate from L-histidine: step 2/3. In terms of biological role, catalyzes the conversion of urocanate to 4-imidazolone-5-propionate. The polypeptide is Urocanate hydratase (Pseudomonas aeruginosa (strain ATCC 15692 / DSM 22644 / CIP 104116 / JCM 14847 / LMG 12228 / 1C / PRS 101 / PAO1)).